Reading from the N-terminus, the 411-residue chain is Adenylosuccinate synthetase (411 aa).

GTP-binding positions include 11-17 and 39-41; these read GDEGKGK and GHT. The active-site Proton acceptor is aspartate 12. Positions 12 and 39 each coordinate Mg(2+). Residues 12-15, 37-40, threonine 121, arginine 135, glutamine 215, threonine 230, and arginine 294 each bind IMP; these read DEGK and NAGH. The Proton donor role is filled by histidine 40. 290 to 296 contacts substrate; that stretch reads TTTKRPR. GTP contacts are provided by residues arginine 296, 322–324, and 400–402; these read KLD and STS.

It belongs to the adenylosuccinate synthetase family. As to quaternary structure, homodimer. Mg(2+) serves as cofactor.

The protein resides in the cytoplasm. It carries out the reaction IMP + L-aspartate + GTP = N(6)-(1,2-dicarboxyethyl)-AMP + GDP + phosphate + 2 H(+). Its pathway is purine metabolism; AMP biosynthesis via de novo pathway; AMP from IMP: step 1/2. Its function is as follows. Plays an important role in the de novo pathway of purine nucleotide biosynthesis. Catalyzes the first committed step in the biosynthesis of AMP from IMP. This is Adenylosuccinate synthetase from Helicobacter pylori (strain J99 / ATCC 700824) (Campylobacter pylori J99).